The following is a 359-amino-acid chain: 4-hydroxy-3-methylbut-2-en-1-yl diphosphate synthase (flavodoxin) (359 aa).

Cys264, Cys267, Cys299, and Glu306 together coordinate [4Fe-4S] cluster.

This sequence belongs to the IspG family. [4Fe-4S] cluster serves as cofactor.

It catalyses the reaction (2E)-4-hydroxy-3-methylbut-2-enyl diphosphate + oxidized [flavodoxin] + H2O + 2 H(+) = 2-C-methyl-D-erythritol 2,4-cyclic diphosphate + reduced [flavodoxin]. It functions in the pathway isoprenoid biosynthesis; isopentenyl diphosphate biosynthesis via DXP pathway; isopentenyl diphosphate from 1-deoxy-D-xylulose 5-phosphate: step 5/6. Functionally, converts 2C-methyl-D-erythritol 2,4-cyclodiphosphate (ME-2,4cPP) into 1-hydroxy-2-methyl-2-(E)-butenyl 4-diphosphate. This chain is 4-hydroxy-3-methylbut-2-en-1-yl diphosphate synthase (flavodoxin), found in Helicobacter pylori (strain ATCC 700392 / 26695) (Campylobacter pylori).